Here is a 350-residue protein sequence, read N- to C-terminus: Biotin synthase (350 aa).

The span at 1-13 shows a compositional bias: polar residues; the sequence is MVTQAATRPSNDA. Residues 1–20 are disordered; sequence MVTQAATRPSNDAGQDGVTE. The 226-residue stretch at 71-296 folds into the Radical SAM core domain; sequence PEVEVEGIIS…RTMLRFAGGR (226 aa). Residues Cys86, Cys90, and Cys93 each coordinate [4Fe-4S] cluster. 4 residues coordinate [2Fe-2S] cluster: Cys129, Cys162, Cys221, and Arg291.

The protein belongs to the radical SAM superfamily. Biotin synthase family. In terms of assembly, homodimer. It depends on [4Fe-4S] cluster as a cofactor. [2Fe-2S] cluster is required as a cofactor.

The catalysed reaction is (4R,5S)-dethiobiotin + (sulfur carrier)-SH + 2 reduced [2Fe-2S]-[ferredoxin] + 2 S-adenosyl-L-methionine = (sulfur carrier)-H + biotin + 2 5'-deoxyadenosine + 2 L-methionine + 2 oxidized [2Fe-2S]-[ferredoxin]. The protein operates within cofactor biosynthesis; biotin biosynthesis; biotin from 7,8-diaminononanoate: step 2/2. Its function is as follows. Catalyzes the conversion of dethiobiotin (DTB) to biotin by the insertion of a sulfur atom into dethiobiotin via a radical-based mechanism. This Mycobacterium ulcerans (strain Agy99) protein is Biotin synthase.